Reading from the N-terminus, the 428-residue chain is Adenylosuccinate synthetase (428 aa).

GTP contacts are provided by residues Gly-12–Lys-18 and Gly-40–Thr-42. The Proton acceptor role is filled by Asp-13. Mg(2+) contacts are provided by Asp-13 and Gly-40. Residues Asp-13 to Lys-16, Asn-38 to His-41, Thr-130, Arg-144, Gln-225, Thr-240, and Arg-304 contribute to the IMP site. His-41 serves as the catalytic Proton donor. Val-300–Arg-306 contributes to the substrate binding site. GTP contacts are provided by residues Arg-306, Lys-332 to Asp-334, and Ser-414 to Gly-416.

Belongs to the adenylosuccinate synthetase family. Homodimer. The cofactor is Mg(2+).

Its subcellular location is the cytoplasm. It carries out the reaction IMP + L-aspartate + GTP = N(6)-(1,2-dicarboxyethyl)-AMP + GDP + phosphate + 2 H(+). Its pathway is purine metabolism; AMP biosynthesis via de novo pathway; AMP from IMP: step 1/2. In terms of biological role, plays an important role in the de novo pathway of purine nucleotide biosynthesis. Catalyzes the first committed step in the biosynthesis of AMP from IMP. In Clostridium botulinum (strain Okra / Type B1), this protein is Adenylosuccinate synthetase.